Reading from the N-terminus, the 248-residue chain is PF03932 family protein CutC (248 aa).

It belongs to the CutC family. In terms of assembly, homodimer.

It is found in the cytoplasm. The sequence is that of PF03932 family protein CutC from Salmonella paratyphi A (strain AKU_12601).